Here is a 735-residue protein sequence, read N- to C-terminus: Rho GTPase-activating protein SYDE1 (735 aa).

Residues 1 to 253 (MAEPLLRKTF…SPTSFRPYEV (253 aa)) are disordered. The span at 14 to 31 (RGREKLPRKKSDAKERGH) shows a compositional bias: basic and acidic residues. The span at 35–46 (RPEPSPPEPEPQ) shows a compositional bias: pro residues. Positions 47–71 (APEGSQAGAEGPSSPEASRSPARGA) are enriched in low complexity. A compositionally biased stretch (pro residues) spans 122-131 (PPAPEPPGPQ). A compositionally biased stretch (gly residues) spans 211–221 (GGPGPAAGPGG). Serine 224, serine 231, serine 235, and serine 244 each carry phosphoserine. The region spanning 249–366 (RPYEVGPAAR…FRGCQAQQLA (118 aa)) is the C2 domain. One can recognise a Rho-GAP domain in the interval 398–604 (LPLPLLVERE…YLLQSWPDPR (207 aa)). Serine 575 is modified (phosphoserine). Disordered regions lie at residues 608-651 (QSPD…SNRY) and 674-696 (DYDH…PRVT). Phosphoserine occurs at positions 681 and 683.

Post-translationally, palmitoylated. Probably palmitoylated by ZDHHC3 and ZDHHC7. Expressed in trophoblast cells of placental villi.

Its function is as follows. GTPase activator for the Rho-type GTPases. As a GCM1 downstream effector, it is involved in placental development and positively regulates trophoblast cells migration. It regulates cytoskeletal remodeling by controlling the activity of Rho GTPases including RHOA, CDC42 and RAC1. This is Rho GTPase-activating protein SYDE1 (SYDE1) from Homo sapiens (Human).